The sequence spans 82 residues: Apovitellenin-1 (82 aa).

The protein belongs to the apovitellenin family. In terms of assembly, monomer. As to expression, found in egg yolk and in plasma.

In terms of biological role, protein component of the very low density lipoprotein (VLDL) of egg-laying females. Potent lipoprotein lipase inhibitor, preventing the loss of triglycerides from VLDL on their way from the liver to the growing oocytes. The chain is Apovitellenin-1 from Anas platyrhynchos (Mallard).